The sequence spans 341 residues: MSLKFQKLSGLVLCFLIALPAWFLGQSFPLVGAPVFAIFLGMLLAIFYKNREHTEAGIAFTSKYILQFAVVLLGFGLNLSQVLTVGKTSLPIIVATISSSLLLAFLLQKWFKLDVNTATLVGVGSSICGGSAIAATAPVIQADGDEIAQSISVIFLFNILAALIFPTLGDMIGLSNHGFALFAGTAVNDTSSVTATAAAWDGLHHSNTLDGATIVKLTRTLAIIPITLGLSFYQVYKTKKVGKNQQHTVKLKKVFPMFILYFILASIITTILTALGVNPIFFTPLKTLSKFCIVMAMGAIGLNTNIVKLVKTGGQAIVLGASCWIVITLVSLGMQHLLGIW.

The next 11 membrane-spanning stretches (helical) occupy residues 7–24 (KLSG…AWFL), 28–47 (FPLV…LAIF), 68–85 (FAVV…VLTV), 90–107 (LPII…AFLL), 120–142 (LVGV…VIQA), 147–169 (IAQS…PTLG), 178–200 (GFAL…AAAW), 211–233 (GATI…LSFY), 254–276 (VFPM…TALG), 291–310 (FCIV…VKLV), and 317–339 (IVLG…HLLG).

This sequence belongs to the UPF0324 family.

Its subcellular location is the cell membrane. In Streptococcus mutans serotype c (strain ATCC 700610 / UA159), this protein is UPF0324 membrane protein SMU_2059c.